A 114-amino-acid polypeptide reads, in one-letter code: Nucleoid-associated protein Cyan7425_0899 (114 aa).

Belongs to the YbaB/EbfC family. As to quaternary structure, homodimer.

It is found in the cytoplasm. Its subcellular location is the nucleoid. In terms of biological role, binds to DNA and alters its conformation. May be involved in regulation of gene expression, nucleoid organization and DNA protection. The protein is Nucleoid-associated protein Cyan7425_0899 of Cyanothece sp. (strain PCC 7425 / ATCC 29141).